Reading from the N-terminus, the 204-residue chain is MRPLTPRQAEILDLIKNNIAETGMPPTRAEIANRLGFKSANAAEEHLKALAKKGFIEIMPGTSRGIRLPQEEQVETGLPLIGQVAAGEPILAQEHVEQYYQVDPNMFKPAADFLLRVRGDSMKNIGILEGDLLAVHKMQQARNGQVVVARVDDDVTVKRFEQKGNVIYLHAENEDYNPIKVDLSCQSLTIEGLAVGVIRNGDWL.

The segment at residues 28 to 48 (RAEIANRLGFKSANAAEEHLK) is a DNA-binding region (H-T-H motif). Catalysis depends on for autocatalytic cleavage activity residues S121 and K158.

This sequence belongs to the peptidase S24 family. Homodimer.

It catalyses the reaction Hydrolysis of Ala-|-Gly bond in repressor LexA.. Its function is as follows. Represses a number of genes involved in the response to DNA damage (SOS response), including recA and lexA. In the presence of single-stranded DNA, RecA interacts with LexA causing an autocatalytic cleavage which disrupts the DNA-binding part of LexA, leading to derepression of the SOS regulon and eventually DNA repair. This chain is LexA repressor, found in Shewanella frigidimarina (strain NCIMB 400).